Reading from the N-terminus, the 592-residue chain is Transducer of Cdc42-dependent actin assembly protein 1 homolog (592 aa).

One can recognise an F-BAR domain in the interval 3-267; the sequence is DSCSWDQLWD…DIGLIDPSRD (265 aa). Disordered stretches follow at residues 343–366 and 447–519; these read FGGGTADKKTDSGDYGTLPPQQRA and SATS…DELY. One can recognise an REM-1 domain in the interval 359-436; the sequence is TLPPQQRARK…IQKFKILLDD (78 aa). A coiled-coil region spans residues 363–441; the sequence is QQRARKIAGK…ILLDDVNAQL (79 aa). Positions 447–457 are enriched in polar residues; that stretch reads SATSVGGSDTP. Low complexity predominate over residues 459 to 474; it reads SIRSVSSASSGVTSRV. The segment covering 495 to 510 has biased composition (polar residues); it reads FSGSNGGSDTDPTING. The SH3 domain occupies 527–589; that stretch reads PVLGEAIAQF…PSSYLKVTWF (63 aa).

Belongs to the FNBP1 family. In terms of assembly, interacts (via SH3 domain) with wsp-1. Interacts with cdc-42 and (via SH3 domain) with wve-1. In terms of tissue distribution, expressed in the germline and specifically in the gonads.

Its subcellular location is the cell junction. It localises to the apical cell membrane. It is found in the basolateral cell membrane. The protein resides in the cytoplasmic vesicle. The protein localises to the cytoplasm. Its subcellular location is the perinuclear region. It localises to the recycling endosome. Plays a role in protein trafficking, actin organization and embryonic morphogenesis. Potentially acts as a cdc-42 effector. May play a role in hypodermal P-cell nuclear positioning. Together with toca-2, is required for protein trafficking regulating yolk protein clathrin-mediated endocytosis by oocytes during oogenesis and retrograde recycling and the sorting of recycling endosome cargo proteins such as mig-14. Also, together with toca-2, controls the distribution of actin at cell junctions. This is Transducer of Cdc42-dependent actin assembly protein 1 homolog from Caenorhabditis elegans.